The sequence spans 532 residues: Zinc metalloproteinase nas-29 (532 aa).

An N-terminal signal peptide occupies residues 1–22 (MISKNTSFCGFLILVLATCMSA). N-linked (GlcNAc...) asparagine glycans are attached at residues asparagine 5, asparagine 27, asparagine 70, and asparagine 106. Residues 23 to 134 (QFVSNESIKL…NGESTDRTKR (112 aa)) constitute a propeptide that is removed on maturation. Positions 135 to 335 (QAYLDNNYPA…HIMNQHYQCQ (201 aa)) constitute a Peptidase M12A domain. Intrachain disulfides connect cysteine 179–cysteine 334, cysteine 201–cysteine 222, cysteine 338–cysteine 358, cysteine 360–cysteine 369, cysteine 380–cysteine 408, and cysteine 435–cysteine 456. Zn(2+) is bound at residue histidine 230. The active site involves glutamate 231. Positions 234 and 240 each coordinate Zn(2+). Residues 330 to 370 (QHYQCQEKCPTQAPCQNGGFTNSRNCKVCKCPTGFGGAYCQ) enclose the EGF-like domain. Residues 380 to 494 (CGGYLNAEET…VSFEYSFVST (115 aa)) form the CUB domain. Asparagine 503 carries N-linked (GlcNAc...) asparagine glycosylation.

Zn(2+) is required as a cofactor.

The protein localises to the secreted. In terms of biological role, metalloprotease. This chain is Zinc metalloproteinase nas-29 (nas-29), found in Caenorhabditis elegans.